Consider the following 175-residue polypeptide: MENDLICLGVITSSHGISGHVKIKTFTENPEDFTSYGTLTDGINTYEVEIISIISQNIIIAQIKGIVSRTDADLLRNKKFFVEKNKLPNPTNDDEFYYSDLIGLNVVLENNNVYGNIKKIHNFGSCDIIEIRLSNSKKSTMLPFTKDIFPYVNVKEKYIIITLPEVIGNNSDIQR.

The region spanning 93–167 (DDEFYYSDLI…YIIITLPEVI (75 aa)) is the PRC barrel domain.

Belongs to the RimM family. Binds ribosomal protein uS19.

It localises to the cytoplasm. Functionally, an accessory protein needed during the final step in the assembly of 30S ribosomal subunit, possibly for assembly of the head region. Essential for efficient processing of 16S rRNA. May be needed both before and after RbfA during the maturation of 16S rRNA. It has affinity for free ribosomal 30S subunits but not for 70S ribosomes. In Ehrlichia chaffeensis (strain ATCC CRL-10679 / Arkansas), this protein is Ribosome maturation factor RimM.